Consider the following 227-residue polypeptide: MRTGLIAKKLGMTRLFKEDGTHVPVTVLHLDNVEVVDARTNERDGYTAIQLGLGNAKVKNVTKANRGHFARTKVEPKRHLAEFRVSEDALLEAGTKLSAAHFVVGQKVDVTGQSKGKGFAGVMKRHNFAGLEASHGVSISHRSHGSTGQRQDPGKVFKGKKMAGHMGDERVTTLNLEIAAVDEERNLIMVRGAIPGAKNGLVLIRDAIKKARHADAPYPAATVAAAG.

N5-methylglutamine is present on Gln-151.

This sequence belongs to the universal ribosomal protein uL3 family. In terms of assembly, part of the 50S ribosomal subunit. Forms a cluster with proteins L14 and L19. Methylated by PrmB.

One of the primary rRNA binding proteins, it binds directly near the 3'-end of the 23S rRNA, where it nucleates assembly of the 50S subunit. The chain is Large ribosomal subunit protein uL3 from Gluconobacter oxydans (strain 621H) (Gluconobacter suboxydans).